Here is a 316-residue protein sequence, read N- to C-terminus: Acetaldehyde dehydrogenase (316 aa).

Position 12–15 (12–15) interacts with NAD(+); it reads SGNI. Cys-132 functions as the Acyl-thioester intermediate in the catalytic mechanism. NAD(+) contacts are provided by residues 163-171 and Asn-289; that span reads SAGPGTRAN.

This sequence belongs to the acetaldehyde dehydrogenase family.

The enzyme catalyses acetaldehyde + NAD(+) + CoA = acetyl-CoA + NADH + H(+). This Bordetella avium (strain 197N) protein is Acetaldehyde dehydrogenase (bphG).